The chain runs to 287 residues: Bifunctional protein FolD 1 (287 aa).

NADP(+) is bound by residues Gly170–Ser172 and Ser195.

This sequence belongs to the tetrahydrofolate dehydrogenase/cyclohydrolase family. In terms of assembly, homodimer.

It carries out the reaction (6R)-5,10-methylene-5,6,7,8-tetrahydrofolate + NADP(+) = (6R)-5,10-methenyltetrahydrofolate + NADPH. The enzyme catalyses (6R)-5,10-methenyltetrahydrofolate + H2O = (6R)-10-formyltetrahydrofolate + H(+). The protein operates within one-carbon metabolism; tetrahydrofolate interconversion. Functionally, catalyzes the oxidation of 5,10-methylenetetrahydrofolate to 5,10-methenyltetrahydrofolate and then the hydrolysis of 5,10-methenyltetrahydrofolate to 10-formyltetrahydrofolate. This is Bifunctional protein FolD 1 from Streptomyces avermitilis (strain ATCC 31267 / DSM 46492 / JCM 5070 / NBRC 14893 / NCIMB 12804 / NRRL 8165 / MA-4680).